Consider the following 999-residue polypeptide: Probable basic-leucine zipper transcription factor N (999 aa).

2 stretches are compositionally biased toward low complexity: residues 1–79 and 88–126; these read MYQS…YQQQ and NNVN…INNN. Residues 1 to 126 are disordered; sequence MYQSIPQQGN…NNNNGNINNN (126 aa). 2 coiled-coil regions span residues 148-198 and 232-282; these read QQQQ…MVLM and GIQQ…QQIS. The segment covering 286–302 has biased composition (polar residues); sequence ESASPYYSTPIQSNTML. 3 disordered regions span residues 286–406, 450–533, and 601–620; these read ESAS…SQDQ, QQLH…PTIN, and EKQK…NYRQ. The segment covering 303-347 has biased composition (low complexity); sequence SIPSSPGIPSSIPQLNNSNNINNNSNNNNNNNNNNNNNNINYNSN. A compositionally biased stretch (polar residues) spans 348 to 406; that stretch reads MASNFISQHSNNGSNTSSPVPQTTYLQNSGGNFNAYNGSNTNSPITPSSYLQPTTSQDQ. Residues 423–451 are a coiled coil; that stretch reads IQQQQKILQQQQQQQLLLQQQIQQQQQQQ. Positions 450–517 are enriched in low complexity; the sequence is QQLHQPQSPQ…IIQPTTIQPQ (68 aa). Positions 601 to 664 constitute a bZIP domain; it reads EKQKTRRRAS…KKLLHENNIL (64 aa). Positions 602–632 are basic motif; that stretch reads KQKTRRRASQNLASRNYRQRKKQYVNEVEDR. The leucine-zipper stretch occupies residues 636–643; the sequence is IVQENERL. 3 disordered regions span residues 665 to 711, 779 to 807, and 870 to 899; these read KSGG…VVET, QSCP…SPYE, and VNNG…TTTT. Acidic residues predominate over residues 682 to 692; it reads SEDEDEDDFDQ. Positions 921–950 form a coiled coil; the sequence is HLVQLSGLLDKLKENIDHENETLIQTYEKL.

It belongs to the bZIP family.

The protein localises to the nucleus. Probable transcriptional regulator. This Dictyostelium discoideum (Social amoeba) protein is Probable basic-leucine zipper transcription factor N (bzpN).